Consider the following 177-residue polypeptide: MANPEKAAAVAELKDLFSNSHAAVLTEYRGLTVAQLKTLRRALGENAEYAVVKNTLTAIAARESGIEAFEGQLNGPSAIAFVSGDAVEAAKSLRDFAKDNPQLVVKGGYLDGVAMDENEIKKLADLESREVLLSKVAGAAKASMSKAAALFQAPLSKTVRTADALRAKLDEQGENAA.

Belongs to the universal ribosomal protein uL10 family. Part of the ribosomal stalk of the 50S ribosomal subunit. The N-terminus interacts with L11 and the large rRNA to form the base of the stalk. The C-terminus forms an elongated spine to which L12 dimers bind in a sequential fashion forming a multimeric L10(L12)X complex.

In terms of biological role, forms part of the ribosomal stalk, playing a central role in the interaction of the ribosome with GTP-bound translation factors. This Kocuria rhizophila (strain ATCC 9341 / DSM 348 / NBRC 103217 / DC2201) protein is Large ribosomal subunit protein uL10.